Reading from the N-terminus, the 184-residue chain is Cytidylate kinase (184 aa).

8 to 16 (GQPGSGKTT) lines the ATP pocket.

Belongs to the cytidylate kinase family. Type 2 subfamily.

Its subcellular location is the cytoplasm. The enzyme catalyses CMP + ATP = CDP + ADP. It catalyses the reaction dCMP + ATP = dCDP + ADP. The protein is Cytidylate kinase of Pyrobaculum calidifontis (strain DSM 21063 / JCM 11548 / VA1).